Here is a 221-residue protein sequence, read N- to C-terminus: Small ribosomal subunit protein uS5 (221 aa).

The 64-residue stretch at 46 to 109 (LKDEVINIER…DNAKLNIIEI (64 aa)) folds into the S5 DRBM domain.

This sequence belongs to the universal ribosomal protein uS5 family. Part of the 30S ribosomal subunit. Contacts protein S4.

Its function is as follows. With S4 and S12 plays an important role in translational accuracy. The chain is Small ribosomal subunit protein uS5 from Picrophilus torridus (strain ATCC 700027 / DSM 9790 / JCM 10055 / NBRC 100828 / KAW 2/3).